A 418-amino-acid polypeptide reads, in one-letter code: Glutamyl-tRNA reductase (418 aa).

Substrate-binding positions include 49–52, S107, 112–114, and Q118; these read TCNR and EPQ. C50 serves as the catalytic Nucleophile. 187–192 serves as a coordination point for NADP(+); sequence GAGETI.

It belongs to the glutamyl-tRNA reductase family. As to quaternary structure, homodimer.

It carries out the reaction (S)-4-amino-5-oxopentanoate + tRNA(Glu) + NADP(+) = L-glutamyl-tRNA(Glu) + NADPH + H(+). Its pathway is porphyrin-containing compound metabolism; protoporphyrin-IX biosynthesis; 5-aminolevulinate from L-glutamyl-tRNA(Glu): step 1/2. In terms of biological role, catalyzes the NADPH-dependent reduction of glutamyl-tRNA(Glu) to glutamate 1-semialdehyde (GSA). The sequence is that of Glutamyl-tRNA reductase from Pseudoalteromonas translucida (strain TAC 125).